The following is a 274-amino-acid chain: Nitrogenase iron protein (274 aa).

Residue 8-15 participates in ATP binding; sequence GKGGIGKS. A [4Fe-4S] cluster-binding site is contributed by cysteine 94. Arginine 97 is modified (ADP-ribosylarginine; by dinitrogenase reductase ADP-ribosyltransferase). Cysteine 131 is a binding site for [4Fe-4S] cluster.

The protein belongs to the NifH/BchL/ChlL family. Homodimer. It depends on [4Fe-4S] cluster as a cofactor. The reversible ADP-ribosylation of Arg-97 inactivates the nitrogenase reductase and regulates nitrogenase activity.

It carries out the reaction N2 + 8 reduced [2Fe-2S]-[ferredoxin] + 16 ATP + 16 H2O = H2 + 8 oxidized [2Fe-2S]-[ferredoxin] + 2 NH4(+) + 16 ADP + 16 phosphate + 6 H(+). In terms of biological role, the key enzymatic reactions in nitrogen fixation are catalyzed by the nitrogenase complex, which has 2 components: the iron protein and the molybdenum-iron protein. This chain is Nitrogenase iron protein, found in Chlorobium limicola (strain DSM 245 / NBRC 103803 / 6330).